The primary structure comprises 140 residues: CBS domain-containing protein YhcV (140 aa).

CBS domains follow at residues 8–64 (MTTQ…GRDG) and 72–127 (MSTE…NESA).

In Bacillus subtilis (strain 168), this protein is CBS domain-containing protein YhcV (yhcV).